The primary structure comprises 155 residues: MRIEKCWFCSSNIYQGHGTIYVRNDAKVFRFCRPKCRKLFARRVNPRKVKWTKISRKMANKELCNDAILTFEHRLNEPRMYDRAEAERTLSSIPRILEIRKRREDFFIKDRILTGQEMNKESDLKYIERHANLLEEEVAGEKQVAKAKKREAQTN.

It belongs to the eukaryotic ribosomal protein eL24 family.

This is Probable ribosome biogenesis protein RLP24 (RPL24) from Encephalitozoon cuniculi (strain GB-M1) (Microsporidian parasite).